A 183-amino-acid chain; its full sequence is Negative modulator of initiation of replication (183 aa).

The interval 118–122 (RTRIY) is interaction with DNA.

This sequence belongs to the SeqA family. Homodimer. Polymerizes to form helical filaments.

It localises to the cytoplasm. In terms of biological role, negative regulator of replication initiation, which contributes to regulation of DNA replication and ensures that replication initiation occurs exactly once per chromosome per cell cycle. Binds to pairs of hemimethylated GATC sequences in the oriC region, thus preventing assembly of replication proteins and re-initiation at newly replicated origins. Repression is relieved when the region becomes fully methylated. This Proteus mirabilis (strain HI4320) protein is Negative modulator of initiation of replication.